A 215-amino-acid chain; its full sequence is Pyrrolidone-carboxylate peptidase (215 aa).

Residues E80, C143, and H167 contribute to the active site.

The protein belongs to the peptidase C15 family. As to quaternary structure, homotetramer.

The protein localises to the cytoplasm. The catalysed reaction is Release of an N-terminal pyroglutamyl group from a polypeptide, the second amino acid generally not being Pro.. Its function is as follows. Removes 5-oxoproline from various penultimate amino acid residues except L-proline. The protein is Pyrrolidone-carboxylate peptidase of Bacillus cereus (strain Q1).